Consider the following 369-residue polypeptide: H-2 class I histocompatibility antigen, K-B alpha chain (369 aa).

Residues 1-21 form the signal peptide; it reads MVPCTLLLLLAAALAPTQTRA. Residues 22–111 form an alpha-1 region; it reads GPHSLRYFVT…LLGYYNQSKG (90 aa). Topologically, residues 22 to 305 are extracellular; it reads GPHSLRYFVT…EPPPSTVSNM (284 aa). Residue Asn107 is glycosylated (N-linked (GlcNAc...) asparagine). Residues 112–203 form an alpha-2 region; the sequence is GSHTIQVISG…KNGNATLLRT (92 aa). Cys122 and Cys185 form a disulfide bridge. N-linked (GlcNAc...) asparagine glycosylation is present at Asn197. Residues 204–295 form an alpha-3 region; the sequence is DSPKAHVTHH…GLPEPLTLRW (92 aa). An Ig-like C1-type domain is found at 206–294; that stretch reads PKAHVTHHSR…QGLPEPLTLR (89 aa). Cys224 and Cys280 are joined by a disulfide. Positions 296–305 are connecting peptide; it reads EPPPSTVSNM. A helical transmembrane segment spans residues 306 to 328; it reads ATVAVLVVLGAAIVTGAVVAFVM. At 329–369 the chain is on the cytoplasmic side; sequence KMRRRNTGGKGGDYALAPGSQTSDLSLPDCKVMVHDPHSLA. 2 positions are modified to phosphoserine: Ser351 and Ser354.

It belongs to the MHC class I family. Heterodimer of an alpha chain and a beta chain (beta-2-microglobulin).

Its subcellular location is the membrane. Functionally, involved in the presentation of foreign antigens to the immune system. This Mus musculus (Mouse) protein is H-2 class I histocompatibility antigen, K-B alpha chain (H2-K1).